We begin with the raw amino-acid sequence, 215 residues long: Eukaryotic translation initiation factor 4E-1 (215 aa).

Residues 1–35 (MAEDTETRPASAGAEEREEGEIADDGDGSAAAAAG) are disordered. A compositionally biased stretch (acidic residues) spans 16–27 (EREEGEIADDGD). EIF4G-binding stretches follow at residues 40 to 43 (HPLE) and 50 to 86 (FDNPQGKSRAVAWGSTIHPIHTFSTVEDFWSLYNNIH). MRNA is bound by residues 58 to 63 (RAVAWG), Lys90, and 108 to 109 (WE). Cys113 and Cys151 form a disulfide bridge. Positions 134–143 (HTLLALIGEQ) are EIF4G-binding. MRNA-binding positions include 158–163 (RKNQER) and 203–207 (KRSDK).

It belongs to the eukaryotic initiation factor 4E family. As to quaternary structure, EIF4F is a multi-subunit complex, the composition of which varies with external and internal environmental conditions. It is composed of at least EIF4A, EIF4E and EIF4G. EIF4E is also known to interact with other partners. In higher plants two isoforms of EIF4F have been identified, named isoform EIF4F and isoform EIF(iso)4F. Isoform EIF4F has subunits p220 and p26, whereas isoform EIF(iso)4F has subunits p82 and p28. (Microbial infection) Interacts with potyvirus viral genome-linked protein (VPg); this interaction is possible in susceptible hosts but impaired in resistant plants. Post-translationally, according to the redox status, the Cys-113-Cys-151 disulfide bridge may have a role in regulating protein function by affecting its ability to bind capped mRNA.

It is found in the nucleus. The protein resides in the cytoplasm. In terms of biological role, component of the protein complex eIF4F, which is involved in the recognition of the mRNA cap, ATP-dependent unwinding of 5'-terminal secondary structure and recruitment of mRNA to the ribosome. Recognizes and binds the 7-methylguanosine-containing mRNA cap during an early step in the initiation of protein synthesis and facilitates ribosome binding by inducing the unwinding of the mRNAs secondary structures. Key component of recessive resistance to potyviruses and bymoviruses, including barley yellow mosaic virus and barley mild mosaic virus. (Microbial infection) Susceptibility host factor required for viral infection by recruiting viral RNAs to the host ribosomal complex via an interaction with viral genome-linked protein (VPg). The chain is Eukaryotic translation initiation factor 4E-1 from Hordeum vulgare subsp. vulgare (Domesticated barley).